Here is a 357-residue protein sequence, read N- to C-terminus: Elongation factor Ts (357 aa).

Positions 82-85 (TDFV) are involved in Mg(2+) ion dislocation from EF-Tu.

Belongs to the EF-Ts family.

It is found in the cytoplasm. Associates with the EF-Tu.GDP complex and induces the exchange of GDP to GTP. It remains bound to the aminoacyl-tRNA.EF-Tu.GTP complex up to the GTP hydrolysis stage on the ribosome. In Campylobacter jejuni subsp. jejuni serotype O:23/36 (strain 81-176), this protein is Elongation factor Ts.